The following is a 140-amino-acid chain: Ribosome maturation factor RimP (140 aa).

Belongs to the RimP family.

The protein localises to the cytoplasm. Required for maturation of 30S ribosomal subunits. This is Ribosome maturation factor RimP from Campylobacter jejuni subsp. jejuni serotype O:2 (strain ATCC 700819 / NCTC 11168).